Here is a 1796-residue protein sequence, read N- to C-terminus: Y' element ATP-dependent helicase protein 1 copy 5 (1796 aa).

A disordered region spans residues 743 to 767 (AGEAASSDHDQKISRVTRKRPREPK). The Helicase ATP-binding domain maps to 797 to 974 (EIYMADTPSV…LQRIGLTGLA (178 aa)). Residue 810-817 (APPGYGKT) participates in ATP binding. In terms of domain architecture, Helicase C-terminal spans 1031–1180 (KLLLALFEIE…EFYGLESKKG (150 aa)). Disordered stretches follow at residues 1254-1278 (ANASTNATTNSSTNATTTASTNVRT) and 1294-1421 (TTES…DINK). Residues 1294–1397 (TTESTNSSTN…ATTTESTNAS (104 aa)) are compositionally biased toward low complexity. The span at 1398–1421 (AKEDANKDGNAEDNRFHPVTDINK) shows a compositional bias: basic and acidic residues.

It belongs to the helicase family. Yeast subtelomeric Y' repeat subfamily.

In terms of biological role, catalyzes DNA unwinding and is involved in telomerase-independent telomere maintenance. This chain is Y' element ATP-dependent helicase protein 1 copy 5 (YRF1-5), found in Saccharomyces cerevisiae (strain ATCC 204508 / S288c) (Baker's yeast).